The following is a 160-amino-acid chain: Nucleotide-binding protein VC_1508 (160 aa).

It belongs to the YajQ family.

Its function is as follows. Nucleotide-binding protein. This Vibrio cholerae serotype O1 (strain ATCC 39315 / El Tor Inaba N16961) protein is Nucleotide-binding protein VC_1508.